A 384-amino-acid chain; its full sequence is Galactokinase (384 aa).

34-37 (EHTD) lines the substrate pocket. 123–129 (SSGLSSS) is an ATP binding site. 2 residues coordinate Mg(2+): serine 129 and glutamate 161. Aspartate 173 serves as the catalytic Proton acceptor. Position 222 (tyrosine 222) interacts with substrate.

Belongs to the GHMP kinase family. GalK subfamily.

The protein localises to the cytoplasm. It catalyses the reaction alpha-D-galactose + ATP = alpha-D-galactose 1-phosphate + ADP + H(+). It functions in the pathway carbohydrate metabolism; galactose metabolism. Functionally, catalyzes the transfer of the gamma-phosphate of ATP to D-galactose to form alpha-D-galactose-1-phosphate (Gal-1-P). This is Galactokinase from Actinobacillus pleuropneumoniae (Haemophilus pleuropneumoniae).